The chain runs to 261 residues: Pantothenate synthetase (261 aa).

Position 29–36 (29–36 (MGALHNGH)) interacts with ATP. The Proton donor role is filled by His36. A (R)-pantoate-binding site is contributed by Gln60. Residue Gln60 coordinates beta-alanine. 147–150 (GEKD) provides a ligand contact to ATP. Residue Gln153 participates in (R)-pantoate binding. 184-187 (LSSR) contributes to the ATP binding site.

The protein belongs to the pantothenate synthetase family. In terms of assembly, homodimer.

It is found in the cytoplasm. It catalyses the reaction (R)-pantoate + beta-alanine + ATP = (R)-pantothenate + AMP + diphosphate + H(+). It participates in cofactor biosynthesis; (R)-pantothenate biosynthesis; (R)-pantothenate from (R)-pantoate and beta-alanine: step 1/1. Its function is as follows. Catalyzes the condensation of pantoate with beta-alanine in an ATP-dependent reaction via a pantoyl-adenylate intermediate. The sequence is that of Pantothenate synthetase from Francisella tularensis subsp. novicida (strain U112).